The primary structure comprises 509 residues: tRNA-2-methylthio-N(6)-dimethylallyladenosine synthase (509 aa).

A compositionally biased stretch (polar residues) spans 1–15 (MNEQQRLASQQVNSS). The disordered stretch occupies residues 1–23 (MNEQQRLASQQVNSSTKKEEKDY). One can recognise an MTTase N-terminal domain in the interval 66–184 (RKFYIRTYGC…LPYILKDAMF (119 aa)). Positions 75, 111, 145, 221, 225, and 228 each coordinate [4Fe-4S] cluster. Residues 207-437 (RRGDIKAWVN…NALVNKLAIE (231 aa)) form the Radical SAM core domain. One can recognise a TRAM domain in the interval 440-503 (DRYKGQIVEV…TWSLNGELVE (64 aa)).

This sequence belongs to the methylthiotransferase family. MiaB subfamily. As to quaternary structure, monomer. [4Fe-4S] cluster is required as a cofactor.

The protein resides in the cytoplasm. The enzyme catalyses N(6)-dimethylallyladenosine(37) in tRNA + (sulfur carrier)-SH + AH2 + 2 S-adenosyl-L-methionine = 2-methylsulfanyl-N(6)-dimethylallyladenosine(37) in tRNA + (sulfur carrier)-H + 5'-deoxyadenosine + L-methionine + A + S-adenosyl-L-homocysteine + 2 H(+). Its function is as follows. Catalyzes the methylthiolation of N6-(dimethylallyl)adenosine (i(6)A), leading to the formation of 2-methylthio-N6-(dimethylallyl)adenosine (ms(2)i(6)A) at position 37 in tRNAs that read codons beginning with uridine. The sequence is that of tRNA-2-methylthio-N(6)-dimethylallyladenosine synthase from Bacillus anthracis.